A 212-amino-acid chain; its full sequence is MKLQLQCFLINDLEKYNCINVSVSDKVFGYPFNPALIHQIVSSYLINCRQGSKSQKSRSDVSGSNKKPWRQKGTGRARSGSVKSPIWRSGGVTFASKPKKYDQKINKKMYKGAMKSILSKLVCDNRLFLIEDLFLEKPKTNLLLKKLKNITSDRSVLIVTDNVIDKNLILASSNLHTVKIYNLNSIDPVSLINFNITLLFRTIVESLELRLS.

The span at 54–65 (SQKSRSDVSGSN) shows a compositional bias: polar residues. Residues 54-85 (SQKSRSDVSGSNKKPWRQKGTGRARSGSVKSP) form a disordered region.

The protein belongs to the universal ribosomal protein uL4 family. Part of the 50S ribosomal subunit.

Its function is as follows. One of the primary rRNA binding proteins, this protein initially binds near the 5'-end of the 23S rRNA. It is important during the early stages of 50S assembly. It makes multiple contacts with different domains of the 23S rRNA in the assembled 50S subunit and ribosome. In terms of biological role, forms part of the polypeptide exit tunnel. The polypeptide is Large ribosomal subunit protein uL4 (Blochmanniella floridana).